The following is a 349-amino-acid chain: Ribosomal RNA large subunit methyltransferase M (349 aa).

Residues Ser-183, 216–219 (APGG), Asp-235, Asp-255, and Asp-271 contribute to the S-adenosyl-L-methionine site. Lys-300 acts as the Proton acceptor in catalysis.

This sequence belongs to the class I-like SAM-binding methyltransferase superfamily. RNA methyltransferase RlmE family. RlmM subfamily. In terms of assembly, monomer.

It localises to the cytoplasm. It carries out the reaction cytidine(2498) in 23S rRNA + S-adenosyl-L-methionine = 2'-O-methylcytidine(2498) in 23S rRNA + S-adenosyl-L-homocysteine + H(+). Its function is as follows. Catalyzes the 2'-O-methylation at nucleotide C2498 in 23S rRNA. The polypeptide is Ribosomal RNA large subunit methyltransferase M (Stutzerimonas stutzeri (strain A1501) (Pseudomonas stutzeri)).